We begin with the raw amino-acid sequence, 104 residues long: Small ribosomal subunit protein uS10 (104 aa).

It belongs to the universal ribosomal protein uS10 family. In terms of assembly, part of the 30S ribosomal subunit.

Its function is as follows. Involved in the binding of tRNA to the ribosomes. The chain is Small ribosomal subunit protein uS10 from Buchnera aphidicola subsp. Baizongia pistaciae (strain Bp).